Consider the following 81-residue polypeptide: Large ribosomal subunit protein bL31B (81 aa).

Belongs to the bacterial ribosomal protein bL31 family. Type B subfamily. In terms of assembly, part of the 50S ribosomal subunit.

In Bacillus cereus (strain G9842), this protein is Large ribosomal subunit protein bL31B.